A 197-amino-acid chain; its full sequence is MAAVKDSCGKGEMATGNGRRLHLGIPEAVFVEDVDSFMKQPGNETADTVLKKLDEQYQKYKFMELNLAQKKRRLKGQIPEIKQTLEILKYMQKKKESTNSMETRFLLADNLYCKASVPPTDKVCLWLGANVMLEYDIDEAQALLEKNLSTATKNLDSLEEDLDFLRDQFTTTEVNMARVYNWDVKRRNKDDSTKNKA.

An N-acetylalanine modification is found at alanine 2. Residue lysine 59 is modified to N6-acetyllysine.

The protein belongs to the prefoldin subunit alpha family. Heterohexamer of two PFD-alpha type and four PFD-beta type subunits. Binds to the C-terminal part of VHL. As to expression, ubiquitous.

The protein resides in the cytoplasm. It is found in the nucleus. Binds specifically to cytosolic chaperonin (c-CPN) and transfers target proteins to it. Binds to nascent polypeptide chain and promotes folding in an environment in which there are many competing pathways for nonnative proteins. In Homo sapiens (Human), this protein is Prefoldin subunit 3 (VBP1).